The following is a 156-amino-acid chain: Ribosomal RNA large subunit methyltransferase H (156 aa).

S-adenosyl-L-methionine is bound by residues Leu-73, Gly-104, and 123 to 128 (LSALTL).

The protein belongs to the RNA methyltransferase RlmH family. Homodimer.

It is found in the cytoplasm. It catalyses the reaction pseudouridine(1915) in 23S rRNA + S-adenosyl-L-methionine = N(3)-methylpseudouridine(1915) in 23S rRNA + S-adenosyl-L-homocysteine + H(+). Its function is as follows. Specifically methylates the pseudouridine at position 1915 (m3Psi1915) in 23S rRNA. In Shewanella baltica (strain OS223), this protein is Ribosomal RNA large subunit methyltransferase H.